We begin with the raw amino-acid sequence, 345 residues long: Phosphoribosylformylglycinamidine cyclo-ligase (345 aa).

It belongs to the AIR synthase family.

Its subcellular location is the cytoplasm. It catalyses the reaction 2-formamido-N(1)-(5-O-phospho-beta-D-ribosyl)acetamidine + ATP = 5-amino-1-(5-phospho-beta-D-ribosyl)imidazole + ADP + phosphate + H(+). The protein operates within purine metabolism; IMP biosynthesis via de novo pathway; 5-amino-1-(5-phospho-D-ribosyl)imidazole from N(2)-formyl-N(1)-(5-phospho-D-ribosyl)glycinamide: step 2/2. The polypeptide is Phosphoribosylformylglycinamidine cyclo-ligase (Chromobacterium violaceum (strain ATCC 12472 / DSM 30191 / JCM 1249 / CCUG 213 / NBRC 12614 / NCIMB 9131 / NCTC 9757 / MK)).